A 156-amino-acid polypeptide reads, in one-letter code: MPRKGHIAKRDVLPDPLYNSKVVTKLINNIMEDGKKGVAQKICYNAFEYLKEKTGKEPMEVFEAAMNNVMPLLEVKARRIGGATYQVPIEVRPERRQTLGIRWMLAAADKRGEKYMHLKLAGELLDASNNTGAAVKKREDTHKMAEANKAFAHYRY.

Belongs to the universal ribosomal protein uS7 family. Part of the 30S ribosomal subunit. Contacts proteins S9 and S11.

In terms of biological role, one of the primary rRNA binding proteins, it binds directly to 16S rRNA where it nucleates assembly of the head domain of the 30S subunit. Is located at the subunit interface close to the decoding center, probably blocks exit of the E-site tRNA. The chain is Small ribosomal subunit protein uS7 from Clostridium acetobutylicum (strain ATCC 824 / DSM 792 / JCM 1419 / IAM 19013 / LMG 5710 / NBRC 13948 / NRRL B-527 / VKM B-1787 / 2291 / W).